Reading from the N-terminus, the 166-residue chain is ATP synthase subunit b (166 aa).

A helical membrane pass occupies residues 10–30 (LLFWMVIVFGIVFVILAKYGF).

The protein belongs to the ATPase B chain family. In terms of assembly, F-type ATPases have 2 components, F(1) - the catalytic core - and F(0) - the membrane proton channel. F(1) has five subunits: alpha(3), beta(3), gamma(1), delta(1), epsilon(1). F(0) has three main subunits: a(1), b(2) and c(10-14). The alpha and beta chains form an alternating ring which encloses part of the gamma chain. F(1) is attached to F(0) by a central stalk formed by the gamma and epsilon chains, while a peripheral stalk is formed by the delta and b chains.

The protein localises to the cell inner membrane. In terms of biological role, f(1)F(0) ATP synthase produces ATP from ADP in the presence of a proton or sodium gradient. F-type ATPases consist of two structural domains, F(1) containing the extramembraneous catalytic core and F(0) containing the membrane proton channel, linked together by a central stalk and a peripheral stalk. During catalysis, ATP synthesis in the catalytic domain of F(1) is coupled via a rotary mechanism of the central stalk subunits to proton translocation. Its function is as follows. Component of the F(0) channel, it forms part of the peripheral stalk, linking F(1) to F(0). This is ATP synthase subunit b from Phocaeicola vulgatus (strain ATCC 8482 / DSM 1447 / JCM 5826 / CCUG 4940 / NBRC 14291 / NCTC 11154) (Bacteroides vulgatus).